The chain runs to 532 residues: Protein DETOXIFICATION 48 (532 aa).

A run of 12 helical transmembrane segments spans residues 65 to 85 (ISGP…ISML), 95 to 115 (LAGG…VISG), 136 to 156 (LGLT…PISF), 174 to 194 (ISSV…LLSL), 211 to 231 (VTYS…LLVV), 235 to 255 (MGVA…VVLL), 279 to 301 (GWSA…WWWY), 322 to 342 (GILI…SLGV), 363 to 383 (IISL…AVLV), 397 to 417 (ILQL…GNCP), 437 to 457 (INLG…GFVF), and 464 to 484 (LWFG…CALL). The interval 496-532 (EELTSQTPGKSPPLLPIASSKSRSTSGTEDMMRTMLV) is disordered. The segment covering 514–523 (SSKSRSTSGT) has biased composition (polar residues).

The protein belongs to the multi antimicrobial extrusion (MATE) (TC 2.A.66.1) family. Highly expressed in shoot apices relative to leaves. At vegetative stages, highly expressed at the stipules. At reproductive stages, most highly expressed in the mature pollen. Also expressed in the tips of sepals.

It localises to the golgi apparatus membrane. The protein localises to the late endosome membrane. Functionally, functions as a multidrug and toxin extrusion transporter. Contributes to iron homeostasis during stress responses and senescence. Could be involved in specifying the lateral organ initiation rate. May act as a negative regulator of hypocotyl cell elongation in the light. The sequence is that of Protein DETOXIFICATION 48 from Arabidopsis thaliana (Mouse-ear cress).